A 126-amino-acid polypeptide reads, in one-letter code: Adenosine 5'-monophosphoramidase HINT1 (126 aa).

A2 is subject to N-acetylalanine. The region spanning 18 to 126 (IFGKIIRKEI…GGRQMNWPPG (109 aa)) is the HIT domain. N6-acetyllysine occurs at positions 21 and 30. 43–44 (DI) is a binding site for AMP. 2 positions are modified to phosphoserine: S45 and S72. Residues N99, 105–107 (GQS), and 112–114 (HLH) each bind AMP. A Histidine triad motif motif is present at residues 110–114 (HVHLH). H112 acts as the Tele-AMP-histidine intermediate in catalysis.

Belongs to the HINT family. As to quaternary structure, homodimer. Interacts with CDK7. Interacts with RUVBL1 and RUVBL2 and is associated with the LEF1/TCF1-CTNNB1 complex and with a KAT5 histone acetyltransferase complex. Identified in a complex with MITF and CTNNB1. Interacts with CDC34 and RBX1, and is part of a SCF (SKP2-CUL1-F-box protein) E3 ubiquitin-protein ligase complex. Interacts with SUMO1, SUMO2 and RGS17. Interacts with the Ten-1 ICD form of TENM1. Interacts with CALM1; interaction increases in the presence of calcium ions. Widely expressed.

The protein resides in the cytoplasm. It localises to the nucleus. The catalysed reaction is adenosine 5'-phosphoramidate + H2O = AMP + NH4(+). Functionally, exhibits adenosine 5'-monophosphoramidase activity, hydrolyzing purine nucleotide phosphoramidates with a single phosphate group such as adenosine 5'monophosphoramidate (AMP-NH2) to yield AMP and NH2. Hydrolyzes adenosine 5'monophosphomorpholidate (AMP-morpholidate) and guanosine 5'monophosphomorpholidate (GMP-morpholidate). Hydrolyzes lysyl-AMP (AMP-N-epsilon-(N-alpha-acetyl lysine methyl ester)) generated by lysine tRNA ligase, as well as Met-AMP, His-AMP and Asp-AMP, lysyl-GMP (GMP-N-epsilon-(N-alpha-acetyl lysine methyl ester)) and AMP-N-alanine methyl ester. Can also convert adenosine 5'-O-phosphorothioate and guanosine 5'-O-phosphorothioate to the corresponding nucleoside 5'-O-phosphates with concomitant release of hydrogen sulfide. In addition, functions as a scaffolding protein that modulates transcriptional activation by the LEF1/TCF1-CTNNB1 complex and by the complex formed with MITF and CTNNB1. Modulates p53/TP53 levels and p53/TP53-mediated apoptosis. Modulates proteasomal degradation of target proteins by the SCF (SKP2-CUL1-F-box protein) E3 ubiquitin-protein ligase complex. Also exhibits SUMO-specific isopeptidase activity, deconjugating SUMO1 from RANGAP1 and RGS17. The polypeptide is Adenosine 5'-monophosphoramidase HINT1 (HINT1) (Bos taurus (Bovine)).